The following is a 399-amino-acid chain: Lovastatin esterase (399 aa).

Ser57 (nucleophile) is an active-site residue. Catalysis depends on proton acceptor residues Lys60 and Tyr170.

It belongs to the class-A beta-lactamase family.

The catalysed reaction is lovastatin + H2O = monacolin J + (S)-2-methylbutanoate + H(+). The enzyme catalyses pravastatin lactone + H2O = pravastatin diol lactone + (S)-2-methylbutanoate + H(+). It carries out the reaction mevastatin + H2O = compactin diol lactone + (S)-2-methylbutanoate + H(+). Functionally, esterase that can hydrolyze the side chain of lovastatin to produce monacolin J. Is also able to hydrolyze the side chains of mevastatin and pravastatin, but not simvastatin. This Penicillium rubens (strain ATCC 28089 / DSM 1075 / NRRL 1951 / Wisconsin 54-1255) (Penicillium chrysogenum) protein is Lovastatin esterase.